The sequence spans 295 residues: Small ribosomal subunit protein uS2 (295 aa).

It belongs to the universal ribosomal protein uS2 family.

The sequence is that of Small ribosomal subunit protein uS2 from Rickettsia typhi (strain ATCC VR-144 / Wilmington).